A 205-amino-acid polypeptide reads, in one-letter code: Thymidylate kinase (205 aa).

ATP is bound at residue 11-18; sequence GVEGAGKS.

The protein belongs to the thymidylate kinase family.

It carries out the reaction dTMP + ATP = dTDP + ADP. Its function is as follows. Phosphorylation of dTMP to form dTDP in both de novo and salvage pathways of dTTP synthesis. This Vesicomyosocius okutanii subsp. Calyptogena okutanii (strain HA) protein is Thymidylate kinase.